The sequence spans 359 residues: Squamosa promoter-binding-like protein 13A (359 aa).

Residues 75-94 (AKPEGSRSSSSKRTRGNGVG) form a disordered region. The segment at 98-175 (MPICLVDGCD…DGHNRRRRKP (78 aa)) adopts an SBP-type zinc-finger fold. Positions 101, 106, 123, 126, 142, 145, 149, and 161 each coordinate Zn(2+). A Bipartite nuclear localization signal motif is present at residues 158 to 174 (KRSCRKRLDGHNRRRRK).

Zn(2+) serves as cofactor.

The protein resides in the nucleus. Trans-acting factor that binds specifically to the consensus nucleotide sequence 5'-TNCGTACAA-3'. In Arabidopsis thaliana (Mouse-ear cress), this protein is Squamosa promoter-binding-like protein 13A (SPL13A).